The sequence spans 556 residues: Formate--tetrahydrofolate ligase (556 aa).

65 to 72 (TPAGEGKS) contributes to the ATP binding site.

Belongs to the formate--tetrahydrofolate ligase family.

It catalyses the reaction (6S)-5,6,7,8-tetrahydrofolate + formate + ATP = (6R)-10-formyltetrahydrofolate + ADP + phosphate. It participates in one-carbon metabolism; tetrahydrofolate interconversion. This is Formate--tetrahydrofolate ligase from Clostridium botulinum (strain Alaska E43 / Type E3).